Here is a 158-residue protein sequence, read N- to C-terminus: Endoribonuclease YbeY (158 aa).

Zn(2+) contacts are provided by H124, H128, and H134.

Belongs to the endoribonuclease YbeY family. Zn(2+) is required as a cofactor.

The protein resides in the cytoplasm. Its function is as follows. Single strand-specific metallo-endoribonuclease involved in late-stage 70S ribosome quality control and in maturation of the 3' terminus of the 16S rRNA. The chain is Endoribonuclease YbeY from Latilactobacillus sakei subsp. sakei (strain 23K) (Lactobacillus sakei subsp. sakei).